Here is a 190-residue protein sequence, read N- to C-terminus: Pyridoxal 5'-phosphate synthase subunit PdxT (190 aa).

L-glutamine is bound at residue 46–48 (GES). Cys78 functions as the Nucleophile in the catalytic mechanism. Residues Arg105 and 133–134 (IR) contribute to the L-glutamine site. Residues His169 and Glu171 each act as charge relay system in the active site.

It belongs to the glutaminase PdxT/SNO family. In terms of assembly, in the presence of PdxS, forms a dodecamer of heterodimers. Only shows activity in the heterodimer.

It carries out the reaction aldehydo-D-ribose 5-phosphate + D-glyceraldehyde 3-phosphate + L-glutamine = pyridoxal 5'-phosphate + L-glutamate + phosphate + 3 H2O + H(+). The enzyme catalyses L-glutamine + H2O = L-glutamate + NH4(+). The protein operates within cofactor biosynthesis; pyridoxal 5'-phosphate biosynthesis. Functionally, catalyzes the hydrolysis of glutamine to glutamate and ammonia as part of the biosynthesis of pyridoxal 5'-phosphate. The resulting ammonia molecule is channeled to the active site of PdxS. In Niallia circulans (Bacillus circulans), this protein is Pyridoxal 5'-phosphate synthase subunit PdxT.